Reading from the N-terminus, the 302-residue chain is B3 domain-containing protein At3g17010 (302 aa).

A DNA-binding region (TF-B3 1) is located at residues 21-116 (FFKIFQRADL…VFHVNIYEQN (96 aa)). The tract at residues 123-192 (PRKFQTMGPS…KVKKKSKSKS (70 aa)) is disordered. Residues 135–174 (IKKEEGENSLIDVKKEEESDESPGRAEFLVRKKKTEDSKS) are compositionally biased toward basic and acidic residues. The span at 175–192 (SKKKMTRNKVKKKSKSKS) shows a compositional bias: basic residues. The segment at residues 199–292 (VPEFKITIRK…EFVLLTSKKN (94 aa)) is a DNA-binding region (TF-B3 2).

Its subcellular location is the nucleus. This is B3 domain-containing protein At3g17010 from Arabidopsis thaliana (Mouse-ear cress).